A 158-amino-acid polypeptide reads, in one-letter code: NAD(P)H-quinone oxidoreductase subunit J, chloroplastic (158 aa).

The protein belongs to the complex I 30 kDa subunit family. NDH is composed of at least 16 different subunits, 5 of which are encoded in the nucleus.

It is found in the plastid. It localises to the chloroplast thylakoid membrane. It catalyses the reaction a plastoquinone + NADH + (n+1) H(+)(in) = a plastoquinol + NAD(+) + n H(+)(out). The enzyme catalyses a plastoquinone + NADPH + (n+1) H(+)(in) = a plastoquinol + NADP(+) + n H(+)(out). NDH shuttles electrons from NAD(P)H:plastoquinone, via FMN and iron-sulfur (Fe-S) centers, to quinones in the photosynthetic chain and possibly in a chloroplast respiratory chain. The immediate electron acceptor for the enzyme in this species is believed to be plastoquinone. Couples the redox reaction to proton translocation, and thus conserves the redox energy in a proton gradient. In Aethionema cordifolium (Lebanon stonecress), this protein is NAD(P)H-quinone oxidoreductase subunit J, chloroplastic.